Consider the following 923-residue polypeptide: Neuropilin-1a (923 aa).

The N-terminal stretch at methionine 1 to alanine 19 is a signal peptide. At leucine 20–proline 856 the chain is on the extracellular side. 3 disulfide bridges follow: cysteine 25-cysteine 52, cysteine 80-cysteine 102, and cysteine 145-cysteine 171. 2 CUB domains span residues cysteine 25–phenylalanine 139 and cysteine 145–leucine 263. N-linked (GlcNAc...) asparagine glycosylation occurs at asparagine 148. Positions 193, 207, and 248 each coordinate Ca(2+). Cysteine 204 and cysteine 226 are joined by a disulfide. Residue asparagine 259 is glycosylated (N-linked (GlcNAc...) asparagine). Cystine bridges form between cysteine 273–cysteine 422 and cysteine 429–cysteine 581. F5/8 type C domains follow at residues cysteine 273–cysteine 422 and cysteine 429–cysteine 581. N-linked (GlcNAc...) asparagine glycosylation occurs at asparagine 520. Residues threonine 587–threonine 624 form a disordered region. Residue serine 612 is glycosylated (O-linked (Xyl...) (chondroitin sulfate) serine; alternate). Serine 612 carries an O-linked (Xyl...) (heparan sulfate) serine; alternate glycan. In terms of domain architecture, MAM spans phenylalanine 642–aspartate 811. The helical transmembrane segment at isoleucine 857–valine 877 threads the bilayer. Residues valine 878–alanine 923 lie on the Cytoplasmic side of the membrane.

Belongs to the neuropilin family.

It localises to the membrane. Receptor involved in the development of the cardiovascular system, in angiogenesis, in the formation of certain neuronal circuits and in organogenesis outside the nervous system. It mediates the chemorepulsant activity of semaphorins. Regulates angiogenesis through a VEGF-dependent pathway. This chain is Neuropilin-1a (nrp1a), found in Danio rerio (Zebrafish).